The sequence spans 1175 residues: Pyruvate carboxylase (1175 aa).

A Biotin carboxylation domain is found at 22 to 474 (NANKILVANR…WTTFIDDTPS (453 aa)). ATP-binding residues include lysine 140, glutamate 224, and histidine 259. The 198-residue stretch at 144-341 (RNLAGKCNVP…IVAAQIQIAA (198 aa)) folds into the ATP-grasp domain. Residue arginine 316 is part of the active site. The Pyruvate carboxyltransferase domain maps to 561–828 (CLIMDTTWRD…NTGITEQNAR (268 aa)). Substrate-binding positions include 569–573 (RDAHQ) and arginine 642. A divalent metal cation is bound at residue aspartate 570. Residues lysine 738, histidine 768, and histidine 770 each contribute to the a divalent metal cation site. Position 738 is an N6-carboxylysine (lysine 738). Threonine 902 lines the substrate pocket. Residues 1099–1174 (KADAHNPNEV…DAGDLICKIT (76 aa)) form the Biotinyl-binding domain. Lysine 1140 is subject to N6-biotinyllysine.

Biotin is required as a cofactor. Zn(2+) serves as cofactor.

The protein localises to the cytoplasm. It carries out the reaction hydrogencarbonate + pyruvate + ATP = oxaloacetate + ADP + phosphate + H(+). It functions in the pathway carbohydrate biosynthesis; gluconeogenesis. Functionally, pyruvate carboxylase catalyzes a 2-step reaction, involving the ATP-dependent carboxylation of the covalently attached biotin in the first step and the transfer of the carboxyl group to pyruvate in the second. This is Pyruvate carboxylase (PYC) from Pichia angusta (Yeast).